The chain runs to 263 residues: HLA class II histocompatibility antigen, DM beta chain (263 aa).

Positions 1-18 (MITFLPLLLGLSLGCTGA) are cleaved as a signal peptide. Positions 19–112 (GGFVAHVEST…PFWGSLTNRT (94 aa)) are beta-1. Over 19 to 218 (GGFVAHVEST…PGLSPMQTLK (200 aa)) the chain is Lumenal. 2 disulfides stabilise this stretch: Cys-29–Cys-97 and Cys-43–Cys-53. Asn-110 is a glycosylation site (N-linked (GlcNAc...) asparagine). A beta-2 region spans residues 113–207 (RPPSVQVAKT…GAPEPILRDW (95 aa)). Residues 114 to 208 (PPSVQVAKTT…APEPILRDWT (95 aa)) enclose the Ig-like C1-type domain. Cysteines 135 and 192 form a disulfide. The connecting peptide stretch occupies residues 208 to 218 (TPGLSPMQTLK). The helical transmembrane segment at 219 to 239 (VSVSAVTLGLGLIIFSLGVIS) threads the bilayer. Topologically, residues 240–263 (WRRAGHSSYTPLPGSNYSEGWHIS) are cytoplasmic. A YXXZ motif motif is present at residues 248–251 (YTPL).

The protein belongs to the MHC class II family. In terms of assembly, heterodimer of an alpha chain (DMA) and a beta chain (DMB). Interacts with MHCII; this interaction mediates rapid selection of high-affinity peptides in a pH-dependent manner, with an optimum at pH 5.5.

It is found in the late endosome membrane. The protein resides in the lysosome membrane. Functionally, plays a critical role in catalyzing the release of class II-associated invariant chain peptide (CLIP) from newly synthesized MHC class II molecules and freeing the peptide binding site for acquisition of antigenic peptides. In B-cells, the interaction between HLA-DM and MHC class II molecules is regulated by HLA-DO. The sequence is that of HLA class II histocompatibility antigen, DM beta chain (HLA-DMB) from Homo sapiens (Human).